The primary structure comprises 335 residues: MAIVSSENRTCADEKLLALYQSWSYIASIVFNCLVPTISTYFLGRAIFQLCNQATIQYSTRILLIATILFAACHQVSYFAFKIDLLHTMFFKLDQPCFLQRSSYDCRFISIAQTTGVVGMALTGLAMSTDRALALTFPADYHKLKSVPRVVLSVFVFIVSFSTWFLLTMNDPLTGYLNHCGFYPSYSVANFQLMLDVILYLAIFNLIWDVILFYYARQQILWRRSYQFQKRYEARISLNCTQAVFVISICQCISNGANSGLMRLLMMIGTSITSVTYSSLLSLFYTAPYSCILLPILMMRISEYIREQRTIGILSLRSEKPGLEEHHQRMRAAWS.

Topologically, residues 1 to 22 are extracellular; it reads MAIVSSENRTCADEKLLALYQS. Residues 23-43 traverse the membrane as a helical segment; that stretch reads WSYIASIVFNCLVPTISTYFL. At 44–61 the chain is on the cytoplasmic side; sequence GRAIFQLCNQATIQYSTR. The chain crosses the membrane as a helical span at residues 62-82; it reads ILLIATILFAACHQVSYFAFK. The Extracellular portion of the chain corresponds to 83-107; sequence IDLLHTMFFKLDQPCFLQRSSYDCR. Residues 108 to 128 form a helical membrane-spanning segment; sequence FISIAQTTGVVGMALTGLAMS. Residues 129–149 lie on the Cytoplasmic side of the membrane; the sequence is TDRALALTFPADYHKLKSVPR. Residues 150–170 traverse the membrane as a helical segment; it reads VVLSVFVFIVSFSTWFLLTMN. At 171-192 the chain is on the extracellular side; it reads DPLTGYLNHCGFYPSYSVANFQ. A helical transmembrane segment spans residues 193 to 213; that stretch reads LMLDVILYLAIFNLIWDVILF. At 214–235 the chain is on the cytoplasmic side; the sequence is YYARQQILWRRSYQFQKRYEAR. A helical transmembrane segment spans residues 236–255; that stretch reads ISLNCTQAVFVISICQCISN. The Extracellular segment spans residues 256-278; that stretch reads GANSGLMRLLMMIGTSITSVTYS. The chain crosses the membrane as a helical span at residues 279 to 299; the sequence is SLLSLFYTAPYSCILLPILMM. Residues 300–335 lie on the Cytoplasmic side of the membrane; the sequence is RISEYIREQRTIGILSLRSEKPGLEEHHQRMRAAWS.

The protein belongs to the nematode receptor-like protein sra family.

The protein localises to the membrane. Functionally, chemosensory receptor that negatively regulates RAS/MAPK signaling during vulva induction and the negative regulation of olfaction of volitile attractants. Required for the suppression of vulval induction in response to food starvation. Signaling acts through the GPA-5 G-alpha protein subunit. This chain is Serpentine receptor class alpha-13, found in Caenorhabditis briggsae.